Reading from the N-terminus, the 220-residue chain is Pyridoxine/pyridoxamine 5'-phosphate oxidase (220 aa).

Residues 49–54, 68–69, Lys75, and Gln97 contribute to the FMN site; these read RMVLLK and YT. Substrate is bound at residue Lys54. The substrate site is built by Tyr115, Arg119, and Ser123. FMN contacts are provided by residues 132–133 and Trp176; that span reads QS. 182–184 serves as a coordination point for substrate; that stretch reads RLH. Position 186 (Arg186) interacts with FMN.

This sequence belongs to the pyridoxamine 5'-phosphate oxidase family. Homodimer. FMN is required as a cofactor.

The enzyme catalyses pyridoxamine 5'-phosphate + O2 + H2O = pyridoxal 5'-phosphate + H2O2 + NH4(+). It catalyses the reaction pyridoxine 5'-phosphate + O2 = pyridoxal 5'-phosphate + H2O2. It functions in the pathway cofactor metabolism; pyridoxal 5'-phosphate salvage; pyridoxal 5'-phosphate from pyridoxamine 5'-phosphate: step 1/1. Its pathway is cofactor metabolism; pyridoxal 5'-phosphate salvage; pyridoxal 5'-phosphate from pyridoxine 5'-phosphate: step 1/1. Catalyzes the oxidation of either pyridoxine 5'-phosphate (PNP) or pyridoxamine 5'-phosphate (PMP) into pyridoxal 5'-phosphate (PLP). The protein is Pyridoxine/pyridoxamine 5'-phosphate oxidase of Paracoccus denitrificans (strain Pd 1222).